Here is an 82-residue protein sequence, read N- to C-terminus: UPF0291 protein PEPE_0871 (82 aa).

The protein belongs to the UPF0291 family.

It is found in the cytoplasm. In Pediococcus pentosaceus (strain ATCC 25745 / CCUG 21536 / LMG 10740 / 183-1w), this protein is UPF0291 protein PEPE_0871.